A 273-amino-acid polypeptide reads, in one-letter code: Proteasome subunit beta type-10 (273 aa).

An N-acetylmethionine modification is found at Met-1. Positions 1–39 are cleaved as a propeptide — removed in mature form; the sequence is MQKTVLEPQRGFSFENCERNAALQRALPGLRVPHARKTG. Thr-40 (nucleophile) is an active-site residue. Ser-230 is subject to Phosphoserine.

The protein belongs to the peptidase T1B family. The 26S proteasome consists of a 20S proteasome core and two 19S regulatory subunits. The 20S proteasome core is composed of 28 subunits that are arranged in four stacked rings, resulting in a barrel-shaped structure. The two end rings are each formed by seven alpha subunits, and the two central rings are each formed by seven beta subunits. The catalytic chamber with the active sites is on the inside of the barrel. Component of the immunoproteasome, where it displaces the equivalent housekeeping subunit PSMB7. Component of the spermatoproteasome, a form of the proteasome specifically found in testis. Post-translationally, autocleaved. The resulting N-terminal Thr residue of the mature subunit is responsible for the nucleophile proteolytic activity.

Its subcellular location is the cytoplasm. It localises to the nucleus. It catalyses the reaction Cleavage of peptide bonds with very broad specificity.. Functionally, the proteasome is a multicatalytic proteinase complex which is characterized by its ability to cleave peptides with Arg, Phe, Tyr, Leu, and Glu adjacent to the leaving group at neutral or slightly basic pH. The proteasome has an ATP-dependent proteolytic activity. This subunit is involved in antigen processing to generate class I binding peptides. The chain is Proteasome subunit beta type-10 (PSMB10) from Bos taurus (Bovine).